The following is a 321-amino-acid chain: Transmembrane protein fend (321 aa).

The signal sequence occupies residues 1–18; that stretch reads MFHSLVLMACALAALSVA. Residues 19–261 lie on the Extracellular side of the membrane; sequence QGAGSARSKS…ALPTPSELGG (243 aa). Residues 262–282 form a helical membrane-spanning segment; that stretch reads VVYPAFGALAFFLALLVMFLF. Topologically, residues 283 to 321 are cytoplasmic; that stretch reads LRPQRKRFPLDADSADTATLIGRSSSSSRNSMDASTLHV.

The protein resides in the membrane. Involved in the normal targeting of ventral muscle, muscle 12, by motoneurons. May function as an axon guidance molecule involved in neuromuscular specificity. In Drosophila melanogaster (Fruit fly), this protein is Transmembrane protein fend (fend).